Reading from the N-terminus, the 212-residue chain is Putative DNA-binding protein At1g48610 (212 aa).

Residues 1-130 (MAKTALTPPA…GRPKKDDVAA (130 aa)) are disordered. Positions 27 to 44 (NKPQTDATGVSATDTASQ) are enriched in polar residues. 3 DNA-binding regions (a.T hook) span residues 45-56 (KRGRGRPPKAKS), 70-79 (TKPSGRPKRN), and 94-98 (KKRGR). The span at 57-72 (DSSQIGAVSAKASTKP) shows a compositional bias: polar residues. The segment covering 103 to 113 (TVTAAVVTTAT) has biased composition (low complexity). The segment at residues 118 to 127 (RKRGRPKKDD) is a DNA-binding region (a.T hook 4). Residues 176-210 (DLKKRTALLQKKVKEAAAKLKQAVTAIDEVQKLAD) are a coiled coil.

Its subcellular location is the nucleus. In terms of biological role, may bind DNA. The polypeptide is Putative DNA-binding protein At1g48610 (Arabidopsis thaliana (Mouse-ear cress)).